The chain runs to 353 residues: MVTQDLKKFSTPVFPFTAIVGQEEMKLALQLNVIDPKIGGVMIMGDRGTGKSTTIRAIADLLPEIEVVKDDPFNSHKSDLDLMGNEIKLAIQNGESLETELIKIPMVDLPLGATEDRVCGTIDIEKALTEGVKAFEPGLLAKANRGILYVDEVNLLDDHLVDILLDSAASGWNTVEREGISIRHPARFVLVGSGNPEEGELRPQLLDRFGMHAEIRTVKDPILRVKVVEERTSFDQTPMVWIENYEKQQQELRDRIVLAQKVLPTVELDYDLRVKISEVCSQLDVDGLRGDIVTNRAAKAHAAYHGRDKVTVEDIAKIITLCLRHRLRKDPLETIDSGNKVSKVFNEIFEIEE.

Gly45 to Ser52 provides a ligand contact to ATP.

This sequence belongs to the Mg-chelatase subunits D/I family.

Its subcellular location is the plastid. It localises to the chloroplast. It carries out the reaction protoporphyrin IX + Mg(2+) + ATP + H2O = Mg-protoporphyrin IX + ADP + phosphate + 3 H(+). Its pathway is porphyrin-containing compound metabolism; chlorophyll biosynthesis. Functionally, involved in chlorophyll biosynthesis; introduces a magnesium ion into protoporphyrin IX to yield Mg-protoporphyrin IX. The polypeptide is Magnesium-chelatase subunit ChlI (chlI) (Trieres chinensis (Marine centric diatom)).